Here is a 286-residue protein sequence, read N- to C-terminus: 4-hydroxy-3-methylbut-2-enyl diphosphate reductase (286 aa).

Cys-12 provides a ligand contact to [4Fe-4S] cluster. His-47 and His-80 together coordinate (2E)-4-hydroxy-3-methylbut-2-enyl diphosphate. Residues His-47 and His-80 each contribute to the dimethylallyl diphosphate site. Isopentenyl diphosphate is bound by residues His-47 and His-80. Cys-102 is a binding site for [4Fe-4S] cluster. Residue His-130 coordinates (2E)-4-hydroxy-3-methylbut-2-enyl diphosphate. His-130 contributes to the dimethylallyl diphosphate binding site. His-130 is an isopentenyl diphosphate binding site. Glu-132 functions as the Proton donor in the catalytic mechanism. Thr-170 is a (2E)-4-hydroxy-3-methylbut-2-enyl diphosphate binding site. Cys-198 is a binding site for [4Fe-4S] cluster. Positions 226, 228, and 270 each coordinate (2E)-4-hydroxy-3-methylbut-2-enyl diphosphate. 3 residues coordinate dimethylallyl diphosphate: Ser-226, Asn-228, and Ser-270. The isopentenyl diphosphate site is built by Ser-226, Asn-228, and Ser-270.

The protein belongs to the IspH family. The cofactor is [4Fe-4S] cluster.

It catalyses the reaction isopentenyl diphosphate + 2 oxidized [2Fe-2S]-[ferredoxin] + H2O = (2E)-4-hydroxy-3-methylbut-2-enyl diphosphate + 2 reduced [2Fe-2S]-[ferredoxin] + 2 H(+). The catalysed reaction is dimethylallyl diphosphate + 2 oxidized [2Fe-2S]-[ferredoxin] + H2O = (2E)-4-hydroxy-3-methylbut-2-enyl diphosphate + 2 reduced [2Fe-2S]-[ferredoxin] + 2 H(+). The protein operates within isoprenoid biosynthesis; dimethylallyl diphosphate biosynthesis; dimethylallyl diphosphate from (2E)-4-hydroxy-3-methylbutenyl diphosphate: step 1/1. It participates in isoprenoid biosynthesis; isopentenyl diphosphate biosynthesis via DXP pathway; isopentenyl diphosphate from 1-deoxy-D-xylulose 5-phosphate: step 6/6. Catalyzes the conversion of 1-hydroxy-2-methyl-2-(E)-butenyl 4-diphosphate (HMBPP) into a mixture of isopentenyl diphosphate (IPP) and dimethylallyl diphosphate (DMAPP). Acts in the terminal step of the DOXP/MEP pathway for isoprenoid precursor biosynthesis. This Desulfovibrio desulfuricans (strain ATCC 27774 / DSM 6949 / MB) protein is 4-hydroxy-3-methylbut-2-enyl diphosphate reductase.